The chain runs to 324 residues: HTH-type transcriptional regulator CysB (324 aa).

Residues 1–59 (MKLQQLRYIVEVVNHNLNVSSTAEGLYTSQPGISKQVRMLEDELGIQIFSRSGKHLTQV) form the HTH lysR-type domain. A DNA-binding region (H-T-H motif) is located at residues 19–38 (VSSTAEGLYTSQPGISKQVR).

The protein belongs to the LysR transcriptional regulatory family. As to quaternary structure, homotetramer.

Its subcellular location is the cytoplasm. In terms of biological role, this protein is a positive regulator of gene expression for the cysteine regulon. The inducer for CysB is N-acetylserine. The polypeptide is HTH-type transcriptional regulator CysB (cysB) (Escherichia coli O157:H7).